A 121-amino-acid polypeptide reads, in one-letter code: Aspartate 1-decarboxylase (121 aa).

Ser25 (schiff-base intermediate with substrate; via pyruvic acid) is an active-site residue. Ser25 bears the Pyruvic acid (Ser) mark. Thr57 lines the substrate pocket. Tyr58 functions as the Proton donor in the catalytic mechanism. Position 73 to 75 (73 to 75) interacts with substrate; it reads GAA.

It belongs to the PanD family. Heterooctamer of four alpha and four beta subunits. Pyruvate is required as a cofactor. In terms of processing, is synthesized initially as an inactive proenzyme, which is activated by self-cleavage at a specific serine bond to produce a beta-subunit with a hydroxyl group at its C-terminus and an alpha-subunit with a pyruvoyl group at its N-terminus.

The protein resides in the cytoplasm. The enzyme catalyses L-aspartate + H(+) = beta-alanine + CO2. The protein operates within cofactor biosynthesis; (R)-pantothenate biosynthesis; beta-alanine from L-aspartate: step 1/1. Catalyzes the pyruvoyl-dependent decarboxylation of aspartate to produce beta-alanine. The polypeptide is Aspartate 1-decarboxylase (Sulfurimonas denitrificans (strain ATCC 33889 / DSM 1251) (Thiomicrospira denitrificans (strain ATCC 33889 / DSM 1251))).